Here is a 45-residue protein sequence, read N- to C-terminus: Large ribosomal subunit protein bL34 (45 aa).

Belongs to the bacterial ribosomal protein bL34 family.

This is Large ribosomal subunit protein bL34 from Kocuria rhizophila (strain ATCC 9341 / DSM 348 / NBRC 103217 / DC2201).